Consider the following 532-residue polypeptide: Putative F-box/LRR-repeat protein At3g42770 (532 aa).

Residues 1 to 46 enclose the F-box domain; sequence MNCLPDELLVQILSFLPTKEATSTSLLSKRWRTLFTLSPNLDFDNS. 3 LRR repeats span residues 113–135, 279–305, and 398–420; these read VSEL…IFTS, IRNV…EIPM, and MNDL…SPKL.

The protein is Putative F-box/LRR-repeat protein At3g42770 of Arabidopsis thaliana (Mouse-ear cress).